The following is a 351-amino-acid chain: Very-long-chain 3-oxoacyl-CoA reductase (351 aa).

A helical membrane pass occupies residues 26-46 (LLWCAFTVGAVKLTTFMLSLI). Residues leucine 72, aspartate 126, asparagine 153, tyrosine 225, lysine 229, valine 258, and serine 260 each coordinate NADP(+). Tyrosine 225 acts as the Proton donor in catalysis. Lysine 229 (lowers pKa of active site Tyr) is an active-site residue.

Belongs to the short-chain dehydrogenases/reductases (SDR) family.

Its subcellular location is the endoplasmic reticulum membrane. It carries out the reaction a very-long-chain (3R)-3-hydroxyacyl-CoA + NADP(+) = a very-long-chain 3-oxoacyl-CoA + NADPH + H(+). Its pathway is lipid metabolism; fatty acid biosynthesis. In terms of biological role, component of the microsomal membrane bound fatty acid elongation system, which produces the 26-carbon very long-chain fatty acids (VLCFA) from palmitate. Catalyzes the reduction of the 3-ketoacyl-CoA intermediate that is formed in each cycle of fatty acid elongation. VLCFAs serve as precursors for ceramide and sphingolipids. This chain is Very-long-chain 3-oxoacyl-CoA reductase, found in Eremothecium gossypii (strain ATCC 10895 / CBS 109.51 / FGSC 9923 / NRRL Y-1056) (Yeast).